Reading from the N-terminus, the 941-residue chain is Pre-mRNA-processing factor 6 (941 aa).

The disordered stretch occupies residues 1-79 (MNKKKKPFLG…DEDLNDTNYD (79 aa)). Positions 39 to 65 (DANDPVDDRHAPPGKRTVGDQMKKNQA) are enriched in basic and acidic residues. Acidic residues predominate over residues 66 to 78 (ADDDDEDLNDTNY). S143 carries the phosphoserine modification. Phosphothreonine occurs at positions 180, 266, and 275. S279 bears the Phosphoserine mark. HAT repeat units follow at residues 384 to 416 (TDIRAKKRVLRKALEHVPNSVRLWKAAVELEEP), 418 to 444 (DARIMLSRAVECCPTSVELWLALARLE), 445 to 476 (TYENARKVLNKARENIPTDRHIWITAAKLEEA), 554 to 586 (NALECARAIYAYALQVFPSKKSVWLRAAYFEKN), 588 to 620 (GTRESLEALLQRAVAHCPKAEVLWLMGAKSKWL), 622 to 654 (GDVPAARSILALAFQANPNSEEIWLAAVKLESE), 689 to 721 (GNISAAQELCEEALRHYEDFPKLWMMKGQIEEQ), 723 to 755 (ELMEKAREAYNQGLKKCPHSTPLWLLLSRLEEK), and 855 to 887 (RKITKAREWFHRTVKIDSDLGDAWAFFYKFELQ).

Identified in the spliceosome B complex. Identified in the spliceosome C complex. Associates with the U5 snRNP particle. Component of the U4/U6-U5 tri-snRNP complex composed of the U4, U6 and U5 snRNAs and at least PRPF3, PRPF4, PRPF6, PRPF8, PRPF31, SNRNP200, TXNL4A, SNRNP40, DDX23, CD2BP2, PPIH, SNU13, EFTUD2, SART1 and USP39, LSm proteins LSm2-8 and Sm proteins. Interacts with ARAF1. Interacts with AR and NR3C1, but not ESR1, independently of the presence of hormones. Interacts with USH1G. In terms of processing, phosphorylated by PRP4K during spliceosome assembly.

Its subcellular location is the nucleus. The protein localises to the nucleoplasm. It is found in the nucleus speckle. Functionally, involved in pre-mRNA splicing as component of the U4/U6-U5 tri-snRNP complex, one of the building blocks of the spliceosome. Enhances dihydrotestosterone-induced transactivation activity of AR, as well as dexamethasone-induced transactivation activity of NR3C1, but does not affect estrogen-induced transactivation. This chain is Pre-mRNA-processing factor 6 (Prpf6), found in Mus musculus (Mouse).